A 213-amino-acid chain; its full sequence is Pyrrolidone-carboxylate peptidase (213 aa).

Active-site residues include glutamate 78, cysteine 141, and histidine 165.

This sequence belongs to the peptidase C15 family. Homotetramer.

It is found in the cytoplasm. The catalysed reaction is Release of an N-terminal pyroglutamyl group from a polypeptide, the second amino acid generally not being Pro.. In terms of biological role, removes 5-oxoproline from various penultimate amino acid residues except L-proline. The chain is Pyrrolidone-carboxylate peptidase from Staphylococcus saprophyticus subsp. saprophyticus (strain ATCC 15305 / DSM 20229 / NCIMB 8711 / NCTC 7292 / S-41).